The chain runs to 479 residues: Aspartyl/glutamyl-tRNA(Asn/Gln) amidotransferase subunit B (479 aa).

Belongs to the GatB/GatE family. GatB subfamily. As to quaternary structure, heterotrimer of A, B and C subunits.

The catalysed reaction is L-glutamyl-tRNA(Gln) + L-glutamine + ATP + H2O = L-glutaminyl-tRNA(Gln) + L-glutamate + ADP + phosphate + H(+). The enzyme catalyses L-aspartyl-tRNA(Asn) + L-glutamine + ATP + H2O = L-asparaginyl-tRNA(Asn) + L-glutamate + ADP + phosphate + 2 H(+). Allows the formation of correctly charged Asn-tRNA(Asn) or Gln-tRNA(Gln) through the transamidation of misacylated Asp-tRNA(Asn) or Glu-tRNA(Gln) in organisms which lack either or both of asparaginyl-tRNA or glutaminyl-tRNA synthetases. The reaction takes place in the presence of glutamine and ATP through an activated phospho-Asp-tRNA(Asn) or phospho-Glu-tRNA(Gln). The protein is Aspartyl/glutamyl-tRNA(Asn/Gln) amidotransferase subunit B of Streptococcus pyogenes serotype M6 (strain ATCC BAA-946 / MGAS10394).